The primary structure comprises 418 residues: MSPAEREFDIVLYGATGFSGKLTAEHLAHSGSTARIALAGRSSERLRGVRMMLGPNAADWPLILADASQPLTLEAMAARAQVVLTTVGPYTRYGLPLVAACAKAGTDYADLTGELMFCRNSIDLYHKQAADTGARIILACGFDSIPSDLNVYQLYRRSVEDGTGELCDTDLVLRSFSQRWVSGGSVATYSEAMRTASSDPEARRLVTDPYTLTTDRGAEPELGAQPDFLRRPGRDLAPELAGFWTGGFVQAPFNTRIVRRSNALQEWAYGRRFRYSETMSLGKSMAAPILAAAVTGTVAGTIGLGNKYFDRLPRRLVERVTPKPGTGPSRKTQERGHYTFETYTTTTTGARYRATFAHNVDAYKSTAVLLAQSGLALALDRDRLAELRGVLTPAAAMGDALLARLPGAGVVMGTTRLS.

This sequence belongs to the saccharopine dehydrogenase family. Enoyl reductase subfamily.

Functionally, involved in the reduction of the double bond between C-4 and C-5 during phthiocerol dimycocerosates (DIM A) and glycosylated phenolphthiocerol dimycocerosates (PGL) biosynthesis. The chain is Trans-acting enoyl reductase from Mycobacterium tuberculosis (strain ATCC 25177 / H37Ra).